Reading from the N-terminus, the 167-residue chain is Putative peroxiredoxin-B (167 aa).

Residues 4–167 (IKRGDRFPTT…STAQKIIAKL (164 aa)) form the Thioredoxin domain. The active-site Cysteine sulfenic acid (-SOH) intermediate is Cys-53. A Microbody targeting signal motif is present at residues 165 to 167 (AKL).

It belongs to the peroxiredoxin family. Prx5 subfamily.

Its subcellular location is the peroxisome membrane. The enzyme catalyses a hydroperoxide + [thioredoxin]-dithiol = an alcohol + [thioredoxin]-disulfide + H2O. Functionally, thiol-specific peroxidase that catalyzes the reduction of hydrogen peroxide and organic hydroperoxides to water and alcohols, respectively. Plays a role in cell protection against oxidative stress by detoxifying peroxides and as sensor of hydrogen peroxide-mediated signaling events. In Candida boidinii (Yeast), this protein is Putative peroxiredoxin-B (PMPB).